The primary structure comprises 174 residues: Frataxin homolog, mitochondrial (174 aa).

A mitochondrion-targeting transit peptide spans 1–21 (MIKRSLASLVRVSSVMGRRYM).

Belongs to the frataxin family. As to quaternary structure, monomer. Forms a 24-mer complex made up of 8 copies of a trimeric subcomplex. Increments in mitochondrial iron uptake induce stepwise assembly of species ranging from trimers to 24-mers. Interacts with ISU1 with a 1 to 1 stoichiometry; the interaction is direct. Interacts with YHB1, SDH1, SDH2, AIM45 and CIR1. In terms of processing, processed in two steps by mitochondrial processing peptidase (MPP). MPP first cleaves the precursor to intermediate form and subsequently converts the intermediate to mature size protein.

Its subcellular location is the mitochondrion matrix. The catalysed reaction is 4 Fe(2+) + O2 + 4 H(+) = 4 Fe(3+) + 2 H2O. In terms of biological role, promotes the biosynthesis of heme as well as the assembly and repair of iron-sulfur clusters by delivering Fe(2+) to proteins involved in these pathways. Plays a role in the protection against iron-catalyzed oxidative stress through its ability to catalyze the oxidation of Fe(2+) to Fe(3+). Can store large amounts of the metal in the form of a ferrihydrite mineral by oligomerization. May be involved in regulation of the mitochondrial electron transport chain. The polypeptide is Frataxin homolog, mitochondrial (Saccharomyces cerevisiae (strain ATCC 204508 / S288c) (Baker's yeast)).